Consider the following 244-residue polypeptide: UPF0173 metal-dependent hydrolase Rcas_3617 (244 aa).

It belongs to the UPF0173 family.

This chain is UPF0173 metal-dependent hydrolase Rcas_3617, found in Roseiflexus castenholzii (strain DSM 13941 / HLO8).